A 552-amino-acid polypeptide reads, in one-letter code: CTP synthase (552 aa).

Positions 1 to 265 (MTKYIFITGG…DEIVVRKLRL (265 aa)) are amidoligase domain. Serine 13 contributes to the CTP binding site. Serine 13 contacts UTP. ATP is bound by residues 14-19 (SLGKGI) and aspartate 71. Residues aspartate 71 and glutamate 139 each contribute to the Mg(2+) site. Residues 146-148 (DIE), 186-191 (KTKPTQ), and lysine 222 each bind CTP. UTP-binding positions include 186-191 (KTKPTQ) and lysine 222. The Glutamine amidotransferase type-1 domain maps to 290–541 (TVAMVGKYVN…VRAARARSEG (252 aa)). Glycine 351 provides a ligand contact to L-glutamine. The active-site Nucleophile; for glutamine hydrolysis is the cysteine 378. L-glutamine-binding positions include 379–382 (LGMQ), glutamate 402, and arginine 469. Active-site residues include histidine 514 and glutamate 516.

Belongs to the CTP synthase family. In terms of assembly, homotetramer.

It catalyses the reaction UTP + L-glutamine + ATP + H2O = CTP + L-glutamate + ADP + phosphate + 2 H(+). It carries out the reaction L-glutamine + H2O = L-glutamate + NH4(+). The enzyme catalyses UTP + NH4(+) + ATP = CTP + ADP + phosphate + 2 H(+). Its pathway is pyrimidine metabolism; CTP biosynthesis via de novo pathway; CTP from UDP: step 2/2. With respect to regulation, allosterically activated by GTP, when glutamine is the substrate; GTP has no effect on the reaction when ammonia is the substrate. The allosteric effector GTP functions by stabilizing the protein conformation that binds the tetrahedral intermediate(s) formed during glutamine hydrolysis. Inhibited by the product CTP, via allosteric rather than competitive inhibition. Catalyzes the ATP-dependent amination of UTP to CTP with either L-glutamine or ammonia as the source of nitrogen. Regulates intracellular CTP levels through interactions with the four ribonucleotide triphosphates. This is CTP synthase from Methylococcus capsulatus (strain ATCC 33009 / NCIMB 11132 / Bath).